Consider the following 251-residue polypeptide: Hydroxyacylglutathione hydrolase (251 aa).

H53, H55, D57, H58, H110, D127, and H165 together coordinate Zn(2+).

The protein belongs to the metallo-beta-lactamase superfamily. Glyoxalase II family. In terms of assembly, monomer. The cofactor is Zn(2+).

It catalyses the reaction an S-(2-hydroxyacyl)glutathione + H2O = a 2-hydroxy carboxylate + glutathione + H(+). Its pathway is secondary metabolite metabolism; methylglyoxal degradation; (R)-lactate from methylglyoxal: step 2/2. Functionally, thiolesterase that catalyzes the hydrolysis of S-D-lactoyl-glutathione to form glutathione and D-lactic acid. This Escherichia coli (strain ATCC 8739 / DSM 1576 / NBRC 3972 / NCIMB 8545 / WDCM 00012 / Crooks) protein is Hydroxyacylglutathione hydrolase.